We begin with the raw amino-acid sequence, 1019 residues long: Vacuolar membrane protease (1019 aa).

The Cytoplasmic portion of the chain corresponds to 1 to 69 (MFLEINFYST…DRIPTVVGFR (69 aa)). The chain crosses the membrane as a helical span at residues 70 to 90 (VIPTTVLVLLTYLTIFTLVIV). Over 91 to 404 (TDWLPEPPKN…AELVIFYLND (314 aa)) the chain is Vacuolar. An N-linked (GlcNAc...) asparagine glycan is attached at Asn158. Zn(2+) contacts are provided by His195 and Asp207. Glu239 acts as the Proton acceptor in catalysis. Residue Glu240 coordinates Zn(2+). Asn256 carries N-linked (GlcNAc...) asparagine glycosylation. Positions 265 and 341 each coordinate Zn(2+). A helical membrane pass occupies residues 405–425 (LLIYNVVSLVVGPISLIFFVV). Residues 426–466 (CEYVLRNERARQPNGHPVSRPSVLEWLKQRSWLRALWRRSK) lie on the Cytoplasmic side of the membrane. The helical transmembrane segment at 467 to 487 (FWIALVITIALQALLVWGYLA) threads the bilayer. Over 488–497 (FNSFTVYSSP) the chain is Vacuolar. The helical transmembrane segment at 498–518 (YLVLISFFSLAYLSLVIPLTF) threads the bilayer. The Cytoplasmic portion of the chain corresponds to 519 to 539 (TFNQTQSPTAKYIAPEREKHT). Residues 540–560 (LLIQVYIFTWILLLFSTIAVA) traverse the membrane as a helical segment. The Vacuolar portion of the chain corresponds to 561–565 (RAQVG). Residues 566–586 (GLYFVTAWNTGVWIACLLAAV) traverse the membrane as a helical segment. The Cytoplasmic segment spans residues 587–651 (EGMMLPVPQG…ASLRKPQEGG (65 aa)). Positions 603–634 (HSAHHHHHHEHEEDQDADDDDREQRQPPTEAT) are disordered. Residues 652 to 672 (VVGWWIVHLLLTIPAPVLLIA) form a helical membrane-spanning segment. Topologically, residues 673–692 (QMGSLLLDSLPQTLADGSPA) are vacuolar. A helical membrane pass occupies residues 693 to 713 (YVVYAAASLTAVLLAVPLTPF). The Cytoplasmic portion of the chain corresponds to 714 to 719 (SGKLHR). Residues 720 to 740 (GLFFLFFLSFLIVTAYLWLAF) form a helical membrane-spanning segment. Over 741–1019 (PFSSADPLKV…LVEAWSPFSV (279 aa)) the chain is Vacuolar. N-linked (GlcNAc...) asparagine glycosylation occurs at Asn774.

This sequence belongs to the peptidase M28 family. Zn(2+) serves as cofactor.

It localises to the vacuole membrane. Functionally, may be involved in vacuolar sorting and osmoregulation. In Laccaria bicolor (strain S238N-H82 / ATCC MYA-4686) (Bicoloured deceiver), this protein is Vacuolar membrane protease.